Here is a 289-residue protein sequence, read N- to C-terminus: S-methyl-5'-thioadenosine phosphorylase (289 aa).

Phosphate is bound by residues S24, R66–H67, and T99–A100. M202 lines the substrate pocket. T203 contributes to the phosphate binding site. D226–D228 is a binding site for substrate.

The protein belongs to the PNP/MTAP phosphorylase family. MTAP subfamily. Homotrimer. In terms of tissue distribution, in embryos, expressed in the fat body and visceral mesoderm.

The protein resides in the cytoplasm. Its subcellular location is the nucleus. It catalyses the reaction S-methyl-5'-thioadenosine + phosphate = 5-(methylsulfanyl)-alpha-D-ribose 1-phosphate + adenine. It participates in amino-acid biosynthesis; L-methionine biosynthesis via salvage pathway; S-methyl-5-thio-alpha-D-ribose 1-phosphate from S-methyl-5'-thioadenosine (phosphorylase route): step 1/1. Functionally, catalyzes the reversible phosphorylation of S-methyl-5'-thioadenosine (MTA) to adenine and 5-methylthioribose-1-phosphate. Involved in the breakdown of MTA, a major by-product of polyamine biosynthesis. Responsible for the first step in the methionine salvage pathway after MTA has been generated from S-adenosylmethionine. Has broad substrate specificity with 6-aminopurine nucleosides as preferred substrates. This Drosophila melanogaster (Fruit fly) protein is S-methyl-5'-thioadenosine phosphorylase (Mtap).